Here is a 287-residue protein sequence, read N- to C-terminus: Thymidylate synthase (287 aa).

Arg-21 provides a ligand contact to dUMP. His-51 contacts (6R)-5,10-methylene-5,6,7,8-tetrahydrofolate. 150-151 serves as a coordination point for dUMP; sequence RR. Residue Cys-170 is the Nucleophile of the active site. Residues 190 to 193, Asn-201, and 231 to 233 each bind dUMP; these read RSGD and HIY. Asp-193 provides a ligand contact to (6R)-5,10-methylene-5,6,7,8-tetrahydrofolate. Ala-286 serves as a coordination point for (6R)-5,10-methylene-5,6,7,8-tetrahydrofolate.

The protein belongs to the thymidylate synthase family. Bacterial-type ThyA subfamily. In terms of assembly, homodimer.

The protein resides in the cytoplasm. It carries out the reaction dUMP + (6R)-5,10-methylene-5,6,7,8-tetrahydrofolate = 7,8-dihydrofolate + dTMP. Its pathway is pyrimidine metabolism; dTTP biosynthesis. In terms of biological role, catalyzes the reductive methylation of 2'-deoxyuridine-5'-monophosphate (dUMP) to 2'-deoxythymidine-5'-monophosphate (dTMP) while utilizing 5,10-methylenetetrahydrofolate (mTHF) as the methyl donor and reductant in the reaction, yielding dihydrofolate (DHF) as a by-product. This enzymatic reaction provides an intracellular de novo source of dTMP, an essential precursor for DNA biosynthesis. The polypeptide is Thymidylate synthase (Mycoplasma pneumoniae (strain ATCC 29342 / M129 / Subtype 1) (Mycoplasmoides pneumoniae)).